The chain runs to 290 residues: Putative heme oxygenase 3 (290 aa).

The span at 1–12 (MSSEVETAEAVD) shows a compositional bias: acidic residues. The segment at 1-33 (MSSEVETAEAVDESEKNSMASEKENHSKIADFS) is disordered. Residues 13 to 33 (ESEKNSMASEKENHSKIADFS) are compositionally biased toward basic and acidic residues. HRM repeat units follow at residues 238–243 (KCPFNA) and 255–260 (NCPFQM).

This sequence belongs to the heme oxygenase family. In terms of tissue distribution, found in the spleen, liver, thymus, prostate, heart, kidney, brain and testis.

The enzyme catalyses heme b + 3 reduced [NADPH--hemoprotein reductase] + 3 O2 = biliverdin IXalpha + CO + Fe(2+) + 3 oxidized [NADPH--hemoprotein reductase] + 3 H2O + H(+). Functionally, heme oxygenase cleaves the heme ring at the alpha methene bridge to form biliverdin. Biliverdin is subsequently converted to bilirubin by biliverdin reductase. Heme oxygenase 3 could be implicated in some heme-dependent regulatory role in the cell. This is Putative heme oxygenase 3 (Hmox3) from Rattus norvegicus (Rat).